A 228-amino-acid polypeptide reads, in one-letter code: Uracil-DNA glycosylase (228 aa).

D64 (proton acceptor) is an active-site residue.

This sequence belongs to the uracil-DNA glycosylase (UDG) superfamily. UNG family.

Its subcellular location is the cytoplasm. It carries out the reaction Hydrolyzes single-stranded DNA or mismatched double-stranded DNA and polynucleotides, releasing free uracil.. Excises uracil residues from the DNA which can arise as a result of misincorporation of dUMP residues by DNA polymerase or due to deamination of cytosine. The sequence is that of Uracil-DNA glycosylase from Yersinia enterocolitica serotype O:8 / biotype 1B (strain NCTC 13174 / 8081).